We begin with the raw amino-acid sequence, 231 residues long: NADH-ubiquinone oxidoreductase chain 4 (231 aa).

6 consecutive transmembrane segments (helical) span residues proline 1–isoleucine 21, threonine 34–leucine 54, serine 61–isoleucine 80, tryptophan 84–leucine 106, isoleucine 118–leucine 138, and leucine 156–leucine 178.

It belongs to the complex I subunit 4 family.

It is found in the mitochondrion membrane. The enzyme catalyses a ubiquinone + NADH + 5 H(+)(in) = a ubiquinol + NAD(+) + 4 H(+)(out). Core subunit of the mitochondrial membrane respiratory chain NADH dehydrogenase (Complex I) that is believed to belong to the minimal assembly required for catalysis. Complex I functions in the transfer of electrons from NADH to the respiratory chain. The immediate electron acceptor for the enzyme is believed to be ubiquinone. The chain is NADH-ubiquinone oxidoreductase chain 4 (MT-ND4) from Trimeresurus albolabris (White-lipped pit viper).